Here is a 613-residue protein sequence, read N- to C-terminus: TANK-binding kinase 1-binding protein 1 (613 aa).

Residues 1–280 (MESMFEDDIS…QDLASNQSEC (280 aa)) are homodimerization. A coiled-coil region spans residues 48–162 (YGDIKERLGG…ALVETHLRQI (115 aa)). A Phosphoserine modification is found at S184. A coiled-coil region spans residues 218 to 277 (TSVSVSELERRRLEEALEAAQGEARGAQLREEQLQAECERLQGELKQLQETRAQDLASNQ). The interaction with TBK1 and IKBKE stretch occupies residues 281–330 (GMAWVKRVGDDQVNLALAYTELTEELGRLRELSSLQGRILRTLLQEQARN). Positions 328–457 (ARNAGQRHSP…HHAKAGFQGR (130 aa)) are disordered. Positions 346–361 (PACPSPSPPARPPPCA) are enriched in pro residues. Residues 362 to 372 (PCQSPAAQRRS) show a composition bias toward low complexity. 6 positions are modified to phosphoserine: S365, S372, S379, S385, S400, and S415. The segment covering 389–406 (PSCPSPVPQRRSPVPPSC) has biased composition (pro residues). Pro residues predominate over residues 416–433 (PVPPSCPAPQPRPPPPPG). Residues S502 and S532 each carry the phosphoserine modification. The segment at 581–607 (IRSCPLCQLGFPVGYPDDALIKHIDSH) adopts a UBZ1-type zinc-finger fold. Zn(2+) contacts are provided by C584, C587, H603, and H607.

In terms of assembly, homodimer. May form a heterodimer with NAP1. Interacts with TKB1 and IKBKE. Weakly interacts with DDX3X.

In terms of biological role, adapter protein which constitutively binds TBK1 and IKBKE playing a role in antiviral innate immunity. Essential for the efficient induction of IRF-dependent transcription following infection with Sendai virus. This is TANK-binding kinase 1-binding protein 1 from Rattus norvegicus (Rat).